The chain runs to 701 residues: Polyribonucleotide nucleotidyltransferase (701 aa).

Mg(2+)-binding residues include Asp-485 and Asp-491. The region spanning 552–611 is the KH domain; that stretch reads PRITTLKINPEKIRDVIGKGGATIRALTEETGTTIELEDDGTVKIASSNGEATKEAIRRI. The 69-residue stretch at 621 to 689 folds into the S1 motif domain; it reads GTVYNGKVVR…RQGRVRLSMK (69 aa).

It belongs to the polyribonucleotide nucleotidyltransferase family. As to quaternary structure, component of the RNA degradosome, which is a multiprotein complex involved in RNA processing and mRNA degradation. Requires Mg(2+) as cofactor.

It is found in the cytoplasm. The catalysed reaction is RNA(n+1) + phosphate = RNA(n) + a ribonucleoside 5'-diphosphate. Its function is as follows. Involved in mRNA degradation. Catalyzes the phosphorolysis of single-stranded polyribonucleotides processively in the 3'- to 5'-direction. The sequence is that of Polyribonucleotide nucleotidyltransferase from Shewanella piezotolerans (strain WP3 / JCM 13877).